The primary structure comprises 125 residues: Holo-[acyl-carrier-protein] synthase (125 aa).

Positions 9 and 58 each coordinate Mg(2+).

Belongs to the P-Pant transferase superfamily. AcpS family. Mg(2+) serves as cofactor.

It is found in the cytoplasm. The enzyme catalyses apo-[ACP] + CoA = holo-[ACP] + adenosine 3',5'-bisphosphate + H(+). In terms of biological role, transfers the 4'-phosphopantetheine moiety from coenzyme A to a Ser of acyl-carrier-protein. This chain is Holo-[acyl-carrier-protein] synthase, found in Shewanella amazonensis (strain ATCC BAA-1098 / SB2B).